A 78-amino-acid polypeptide reads, in one-letter code: Sec-independent protein translocase protein TatA (78 aa).

A helical membrane pass occupies residues 4–21 (SFQHILILLVVVLLLFGR). The segment at 49 to 78 (TAKSDSIKTIDNTGKPTNVQANPQRQDSTV) is disordered. A compositionally biased stretch (polar residues) spans 57–78 (TIDNTGKPTNVQANPQRQDSTV).

This sequence belongs to the TatA/E family. The Tat system comprises two distinct complexes: a TatABC complex, containing multiple copies of TatA, TatB and TatC subunits, and a separate TatA complex, containing only TatA subunits. Substrates initially bind to the TatABC complex, which probably triggers association of the separate TatA complex to form the active translocon.

The protein resides in the cell inner membrane. In terms of biological role, part of the twin-arginine translocation (Tat) system that transports large folded proteins containing a characteristic twin-arginine motif in their signal peptide across membranes. TatA could form the protein-conducting channel of the Tat system. In Afipia carboxidovorans (strain ATCC 49405 / DSM 1227 / KCTC 32145 / OM5) (Oligotropha carboxidovorans), this protein is Sec-independent protein translocase protein TatA.